Reading from the N-terminus, the 91-residue chain is MDEIKYPVLTEKTIRLLEKNQYTFDVNKKSTKPQIKKWIENFFNVKVKAINSHIPPEKKKRIGPIIGHSVRYKRMIITLKTGYSIPLFSNK.

Belongs to the universal ribosomal protein uL23 family. In terms of assembly, part of the 50S ribosomal subunit.

The protein localises to the plastid. The protein resides in the chloroplast. Its function is as follows. Binds to 23S rRNA. This is Large ribosomal subunit protein uL23c (rpl23) from Physcomitrium patens (Spreading-leaved earth moss).